The primary structure comprises 99 residues: Acylphosphatase (99 aa).

The 93-residue stretch at 5–97 (ILQVMIRGRV…RAGEKFSVLP (93 aa)) folds into the Acylphosphatase-like domain. Residues Arg-20 and Asn-38 contribute to the active site.

This sequence belongs to the acylphosphatase family.

It catalyses the reaction an acyl phosphate + H2O = a carboxylate + phosphate + H(+). The polypeptide is Acylphosphatase (acyP) (Bradyrhizobium diazoefficiens (strain JCM 10833 / BCRC 13528 / IAM 13628 / NBRC 14792 / USDA 110)).